The primary structure comprises 205 residues: Small ribosomal subunit protein uS4 (205 aa).

Residues 91–149 (MRLDALVLRAAFARSISQARQLVVHRHILVDGKLVDRPSYSVSPGQTVKVKPKSVPLDP) enclose the S4 RNA-binding domain.

It belongs to the universal ribosomal protein uS4 family. Part of the 30S ribosomal subunit. Contacts protein S5. The interaction surface between S4 and S5 is involved in control of translational fidelity.

In terms of biological role, one of the primary rRNA binding proteins, it binds directly to 16S rRNA where it nucleates assembly of the body of the 30S subunit. Its function is as follows. With S5 and S12 plays an important role in translational accuracy. The chain is Small ribosomal subunit protein uS4 from Tropheryma whipplei (strain TW08/27) (Whipple's bacillus).